The chain runs to 398 residues: 8-amino-7-oxononanoate synthase (398 aa).

R22 and R29 together coordinate substrate. 109–110 (GW) contacts pyridoxal 5'-phosphate. A substrate-binding site is contributed by H141. Residues S189, 214 to 217 (DEAH), and 242 to 245 (TFSK) each bind pyridoxal 5'-phosphate. K245 carries the post-translational modification N6-(pyridoxal phosphate)lysine. Residue T359 participates in substrate binding.

The protein belongs to the class-II pyridoxal-phosphate-dependent aminotransferase family. BioF subfamily. As to quaternary structure, homodimer. Pyridoxal 5'-phosphate serves as cofactor.

The catalysed reaction is 6-carboxyhexanoyl-[ACP] + L-alanine + H(+) = (8S)-8-amino-7-oxononanoate + holo-[ACP] + CO2. It functions in the pathway cofactor biosynthesis; biotin biosynthesis. Catalyzes the decarboxylative condensation of pimeloyl-[acyl-carrier protein] and L-alanine to produce 8-amino-7-oxononanoate (AON), [acyl-carrier protein], and carbon dioxide. This is 8-amino-7-oxononanoate synthase from Gluconacetobacter diazotrophicus (strain ATCC 49037 / DSM 5601 / CCUG 37298 / CIP 103539 / LMG 7603 / PAl5).